Consider the following 831-residue polypeptide: MPLEMEPKMSKLAFGCQRSSTSDDDSGCALEEYAWVPPGLRPEQIQLYFACLPEEKVPYVNSPGEKHRIKQLLYQLPPHDNEVRYCQSLSEEEKKELQVFSAQRKKEALGRGTIKLLSRAMMHAVCEQCGLQMNGGEVAVFASRAGPGVCWRPSCFVCFTCNELLVDLIYFYQDGKIHCGRHHAELLKPRCSACDEIIFADECTEAEGRHWHMKHFCCLECETVLGGQRYIMKDGRPFCCGCFESLYAEYCETCGEHIGVDHAQMTYDGQHWHATEACFSCAQCKASLLGCPFLPKQGQIYCSKTCSLGEDIHASDSSDSAFQSARSRDSRRSVRMGRSSRSADQCRQSLLLSPALNYKFPGLSGSADDTLSRKLDDVSLSGQGAGFAHEEFWKARVDQEASEDPEEWAEHEDYMTQLLLKFGDKNLFQQPPSEVDMRASEHWIPDNMVTNKPEAKQNHQSLASKKYQSDMYWAQSQDGLGDSAYGSHPGPASSRRLQELDLDHGAAGYNHDQTQWYEDSLECLSDLKPEQSVRDSMDSLALSNITGASVDGESKPRPSLYSLQNFEEIEAEDCEKMSNMGTLNSSMLHRSAESLKSLNSELCPEKIIPEEKPVHLPVLRRSKSQSRPQQVKFSDDVIDNGSYDIEIRQPPMSERTRRRVYHFEERGSRPHHHRHRRSRKSRSDNALNLVTERKYSAKDRLRLYTPDNYEKFIQSKGARELQAYMQNANLYGQYAHTTSDYALQNPGMTRFLGLYGDDDDSWCSSSTSSSDSEEEGYFLGQPIPQPRPQRFTYYTDDLSSPASALPTPQFNQRTTKSKKKKGHRGKNCIIS.

The 109-residue stretch at 14–122 (FGCQRSSTSD…TIKLLSRAMM (109 aa)) folds into the PET domain. LIM zinc-binding domains are found at residues 124 to 189 (AVCE…LLKP), 189 to 249 (PRCS…LYAE), and 249 to 313 (EYCE…EDIH). The tract at residues 314 to 346 (ASDSSDSAFQSARSRDSRRSVRMGRSSRSADQC) is disordered. 3 positions are modified to phosphoserine: Ser-315, Ser-591, and Ser-594. Disordered stretches follow at residues 664–688 (EERG…NALN) and 763–831 (CSSS…CIIS). Positions 669–680 (RPHHHRHRRSRK) are enriched in basic residues. Ser-683 bears the Phosphoserine mark. Residues 797–812 (DLSSPASALPTPQFNQ) show a composition bias toward polar residues. Basic residues predominate over residues 815–831 (TKSKKKKGHRGKNCIIS). Residue Cys-828 is modified to Cysteine methyl ester. A lipid anchor (S-farnesyl cysteine) is attached at Cys-828. A propeptide spans 829 to 831 (IIS) (removed in mature form).

This sequence belongs to the prickle / espinas / testin family. In terms of assembly, interacts with REST.

The protein resides in the nucleus membrane. It localises to the cytoplasm. It is found in the cytosol. Its function is as follows. Involved in the planar cell polarity pathway that controls convergent extension during gastrulation and neural tube closure. Convergent extension is a complex morphogenetic process during which cells elongate, move mediolaterally, and intercalate between neighboring cells, leading to convergence toward the mediolateral axis and extension along the anteroposterior axis. Necessary for nuclear localization of REST. May serve as nuclear receptor. This chain is Prickle-like protein 1 (Prickle1), found in Rattus norvegicus (Rat).